Here is a 458-residue protein sequence, read N- to C-terminus: Probable mitochondrial chaperone BCS1-B (458 aa).

Residues 1-26 (MENVITNNNKGLPKSILKFIPEPIQP) lie on the Mitochondrial intermembrane side of the membrane. The helical transmembrane segment at 27–47 (LFENPFFSAGFGLIGVGSILA) threads the bilayer. Over 48-458 (MGRKGFQQAM…INNLNELIKK (411 aa)) the chain is Mitochondrial matrix. 248–255 (GPPGTGKS) serves as a coordination point for ATP.

It belongs to the AAA ATPase family. BCS1 subfamily.

It is found in the mitochondrion inner membrane. The enzyme catalyses ATP + H2O = ADP + phosphate + H(+). Chaperone necessary for the assembly of mitochondrial respiratory chain complex III. The chain is Probable mitochondrial chaperone BCS1-B (bcsl1b) from Dictyostelium discoideum (Social amoeba).